Here is a 1104-residue protein sequence, read N- to C-terminus: Receptor-mediated endocytosis protein 6 (1104 aa).

The 234-residue stretch at 156–389 (LKIAQVVCYL…EMMDSLLVEN (234 aa)) folds into the Ras-GAP domain. The segment at 663–682 (SSLAKQPSGMVSSASAQNIP) is disordered. The VPS9 domain maps to 966–1104 (QKKDKLLQSV…SAVEYIKTIL (139 aa)).

The protein belongs to the GAPVD1 family. In terms of assembly, interacts with GDP-bound rab-5. Interacts with alpha-adaptin.

The protein localises to the membrane. Its subcellular location is the cytoplasmic vesicle. The protein resides in the clathrin-coated vesicle. Acts both as a GTPase-activating protein (GAP) and a guanine nucleotide exchange factor (GEF), and participates in endocytosis. Acts by regulating the activation of rab-5 by exchanging bound GDP for free GTP at clathrin coated pits. This is Receptor-mediated endocytosis protein 6 (rme-6) from Caenorhabditis briggsae.